The following is a 402-amino-acid chain: GPI mannosyltransferase 1 (402 aa).

10 helical membrane passes run 5 to 25 (VILLLTVSLLLRIGFFSYGIF), 79 to 99 (WIHMGKVFFVLFDLITGVMII), 108 to 128 (LTKQLILASIWLLNPIVITIS), 162 to 182 (LSIHFKIYPIIYALPIGIYLL), 191 to 211 (IWRLFMIGISTLIGITAPTYF), 238 to 258 (FSIWNLVLLLESAGIHLSQSI), 260 to 280 (LSKLAFVPQLTLCAVLPYLLW), 309 to 329 (QYFIWYLVLSPFYFANTTITW), 333 to 353 (VVCIFLWILSQAVWLSQAYLL), and 365 to 385 (LFFGNIVFFLINVYLLGVFIT).

This sequence belongs to the PIGM family.

Its subcellular location is the endoplasmic reticulum membrane. The protein operates within glycolipid biosynthesis; glycosylphosphatidylinositol-anchor biosynthesis. Mannosyltransferase involved in glycosylphosphatidylinositol-anchor biosynthesis. Transfers the first alpha-1,4-mannose to GlcN-acyl-PI during GPI precursor assembly. Required for cell wall integrity. This is GPI mannosyltransferase 1 (GPI14) from Kluyveromyces lactis (strain ATCC 8585 / CBS 2359 / DSM 70799 / NBRC 1267 / NRRL Y-1140 / WM37) (Yeast).